A 142-amino-acid chain; its full sequence is Transcriptional regulator MraZ (142 aa).

SpoVT-AbrB domains follow at residues 5–47 (EYQH…TINE) and 76–119 (ACIV…SREK).

The protein belongs to the MraZ family. As to quaternary structure, forms oligomers.

It localises to the cytoplasm. It is found in the nucleoid. The sequence is that of Transcriptional regulator MraZ from Clostridium botulinum (strain Eklund 17B / Type B).